A 213-amino-acid chain; its full sequence is Urease accessory protein UreG (213 aa).

12–19 provides a ligand contact to GTP; that stretch reads GPVGSGKT.

Belongs to the SIMIBI class G3E GTPase family. UreG subfamily. In terms of assembly, homodimer. UreD, UreF and UreG form a complex that acts as a GTP-hydrolysis-dependent molecular chaperone, activating the urease apoprotein by helping to assemble the nickel containing metallocenter of UreC. The UreE protein probably delivers the nickel.

The protein localises to the cytoplasm. Facilitates the functional incorporation of the urease nickel metallocenter. This process requires GTP hydrolysis, probably effectuated by UreG. In Marinomonas sp. (strain MWYL1), this protein is Urease accessory protein UreG.